A 495-amino-acid polypeptide reads, in one-letter code: Glycerol kinase (495 aa).

Thr11 is a binding site for ADP. 3 residues coordinate ATP: Thr11, Thr12, and Ser13. Thr11 is a sn-glycerol 3-phosphate binding site. Arg15 lines the ADP pocket. Residues Arg81, Glu82, Tyr133, and Asp242 each contribute to the sn-glycerol 3-phosphate site. The glycerol site is built by Arg81, Glu82, Tyr133, Asp242, and Gln243. Positions 264 and 307 each coordinate ADP. Thr264, Gly307, Gln311, and Gly408 together coordinate ATP. Gly408 is an ADP binding site.

This sequence belongs to the FGGY kinase family.

It carries out the reaction glycerol + ATP = sn-glycerol 3-phosphate + ADP + H(+). The protein operates within polyol metabolism; glycerol degradation via glycerol kinase pathway; sn-glycerol 3-phosphate from glycerol: step 1/1. Its activity is regulated as follows. Inhibited by fructose 1,6-bisphosphate (FBP). Its function is as follows. Key enzyme in the regulation of glycerol uptake and metabolism. Catalyzes the phosphorylation of glycerol to yield sn-glycerol 3-phosphate. The protein is Glycerol kinase of Geobacter sp. (strain M21).